Consider the following 864-residue polypeptide: DNA mismatch repair protein MutS (864 aa).

Residue 621 to 628 coordinates ATP; that stretch reads GPNMGGKS. Positions 804–833 are disordered; that stretch reads ETGKPESPAPVASRSSKPSMQADMFAEPQP.

Belongs to the DNA mismatch repair MutS family.

In terms of biological role, this protein is involved in the repair of mismatches in DNA. It is possible that it carries out the mismatch recognition step. This protein has a weak ATPase activity. The polypeptide is DNA mismatch repair protein MutS (Teredinibacter turnerae (strain ATCC 39867 / T7901)).